A 179-amino-acid polypeptide reads, in one-letter code: Translation initiation factor IF-3 (179 aa).

The protein belongs to the IF-3 family. In terms of assembly, monomer.

The protein localises to the cytoplasm. IF-3 binds to the 30S ribosomal subunit and shifts the equilibrium between 70S ribosomes and their 50S and 30S subunits in favor of the free subunits, thus enhancing the availability of 30S subunits on which protein synthesis initiation begins. In Buchnera aphidicola subsp. Acyrthosiphon pisum (strain APS) (Acyrthosiphon pisum symbiotic bacterium), this protein is Translation initiation factor IF-3.